Consider the following 132-residue polypeptide: NAD(P)H-quinone oxidoreductase subunit 3 (132 aa).

The next 3 membrane-spanning stretches (helical) occupy residues 22 to 42 (FLGFLIICSLVPVLALAASAL), 76 to 96 (MFALVFVIFDVETVFLYPWAV), and 101 to 121 (LGLLAFIEALIFIAILVVALV).

The protein belongs to the complex I subunit 3 family. NDH-1 can be composed of about 15 different subunits; different subcomplexes with different compositions have been identified which probably have different functions.

It is found in the cellular thylakoid membrane. The enzyme catalyses a plastoquinone + NADH + (n+1) H(+)(in) = a plastoquinol + NAD(+) + n H(+)(out). The catalysed reaction is a plastoquinone + NADPH + (n+1) H(+)(in) = a plastoquinol + NADP(+) + n H(+)(out). Its function is as follows. NDH-1 shuttles electrons from an unknown electron donor, via FMN and iron-sulfur (Fe-S) centers, to quinones in the respiratory and/or the photosynthetic chain. The immediate electron acceptor for the enzyme in this species is believed to be plastoquinone. Couples the redox reaction to proton translocation, and thus conserves the redox energy in a proton gradient. Cyanobacterial NDH-1 also plays a role in inorganic carbon-concentration. The protein is NAD(P)H-quinone oxidoreductase subunit 3 (ndhC) of Thermosynechococcus vestitus (strain NIES-2133 / IAM M-273 / BP-1).